The primary structure comprises 144 residues: Ribosome-binding factor A (144 aa).

A disordered region spans residues Asp120–Ala144. Positions Arg129–Ala144 are enriched in acidic residues.

This sequence belongs to the RbfA family. In terms of assembly, monomer. Binds 30S ribosomal subunits, but not 50S ribosomal subunits or 70S ribosomes.

It is found in the cytoplasm. One of several proteins that assist in the late maturation steps of the functional core of the 30S ribosomal subunit. Associates with free 30S ribosomal subunits (but not with 30S subunits that are part of 70S ribosomes or polysomes). Required for efficient processing of 16S rRNA. May interact with the 5'-terminal helix region of 16S rRNA. In Aeromonas salmonicida (strain A449), this protein is Ribosome-binding factor A.